We begin with the raw amino-acid sequence, 1029 residues long: Pro-apoptotic serine protease NMA111 (1029 aa).

Residues 1–49 form a disordered region; sequence MNGPTSQRAKRKQGSASSLDDRPPKHQRALNGAKQQSTGDNTPEEDMYD. The segment at 84–274 is serine protease; it reads VVSIRFCQTC…LPLDRPLRAL (191 aa). Active-site charge relay system residues include histidine 122, aspartate 153, and serine 235. 2 PDZ domains span residues 307–379 and 845–958; these read PEWE…QRGG and EFLG…VTFD. Residues 997-1029 are disordered; that stretch reads KAMEGEPSEGVPAVEEEAGGAVDDDVPMAAVEK. A compositionally biased stretch (acidic residues) spans 1010–1022; that stretch reads VEEEAGGAVDDDV.

It belongs to the peptidase S1C family.

It localises to the nucleus. Its function is as follows. Nuclear serine protease which mediates apoptosis. The chain is Pro-apoptotic serine protease NMA111 (NMA111) from Pyricularia oryzae (strain 70-15 / ATCC MYA-4617 / FGSC 8958) (Rice blast fungus).